A 543-amino-acid polypeptide reads, in one-letter code: Chaperonin GroEL (543 aa).

ATP-binding positions include 29–32 (TLGP), 86–90 (DGTTT), glycine 413, 476–478 (NAA), and aspartate 492.

Belongs to the chaperonin (HSP60) family. As to quaternary structure, forms a cylinder of 14 subunits composed of two heptameric rings stacked back-to-back. Interacts with the co-chaperonin GroES.

It localises to the cytoplasm. It catalyses the reaction ATP + H2O + a folded polypeptide = ADP + phosphate + an unfolded polypeptide.. Functionally, together with its co-chaperonin GroES, plays an essential role in assisting protein folding. The GroEL-GroES system forms a nano-cage that allows encapsulation of the non-native substrate proteins and provides a physical environment optimized to promote and accelerate protein folding. This is Chaperonin GroEL from Streptococcus pyogenes serotype M5 (strain Manfredo).